The chain runs to 1314 residues: MASKGAGMSFSRKSYRLTSDAEKSRVTGIVQEKLLNDYLNRIFSSSEHAPPAATSRKPLNFQNLPEHLDQLLQVDNEEEESQGQVEGRLGPSTVVLDHTGGFEGLLLVDDDLLGVIGHSNFGTIRSTTCVYKGKWLYEVLISSQGLMQIGWCTISCRFNQEEGVGDTHNSYAYDGNRVRKWNVTTTNYGKAWAAGDIVSCLIDLDDGTLSFCLNGVSLGTAFENLSRGLGMAYFPAISLSFKESVAFNFGSRPLRYPVAGYRPLQDPPSADLVRAQRLLGCFRAVLSVELDPVEGRLLDKESSKWRLRGQPTVLLTLAHIFHHFAPLLRKVYLVEAVLMSFLLGIVEKGTPTQAQSVVHQVLDLLWLFMEDYEVQDCLKQLMMSLLRLYRFSPIVPDLGLQIHYLRLTIAILRHEKSRKFLLSNVLFDVLRSVVFFYIKSPLRVEEAGLQELIPTTWWPHCSSREGKESTEMKEETAEERLRRRAYERGCQRLRKRIEVVEELQVQILKLLLDNKDDNGGEASRYIFLTKFRKFLQENASGRGNMPMLCPPEYMVCFLHRLISALRYYWDEYKASNPHASFSEEAYIPPQVFYNGKVDYFDLQRLGGLLSHLRKTLKDDLASKANIVIDPLELQSTAMDDLDEDEEPAPAMAQRPMQALAVGGPLPLPRPGWLSSPTLGRANRFLSTAAVSLMTPRRPLSTSEKVKVRTLSVEQRTREDIEGSHWNEGLLLGRPPEEPEQPLTENSLLEVLDGAVMMYNLSVHQQLGKMVGVSDDVNEYAMALRDTEDKLRRCPKRRKDILAELTKSQKVFSEKLDHLSRRLAWVHATVYSQEKMLDIYWLLRVCLRTIEHGDRTGSLFAFMPEFYLSVAINSYSALKNYFGPVHSMEELPGYEETLTRLAAILAKHFADARIVGTDIRDSLMQALASYVCYPHSLRAVERIPEEQRIAMVRNLLAPYEQRPWAQTNWILVRLWRGCGFGYRYTRLPHLLKTKLEDANLPSLQKPCPSTLLQQHMADLLQQGPDVAPSFLNSVLNQLNWAFSEFIGMIQEIQQAAERLERNFVDSRQLKVCATCFDLSVSLLRVLEMTITLVPEIFLDWTRPTSEMLLRRLAQLLNQVLNRVTAERNLFDRVVTLRLPGLESVDHYPILVAVTGILVQLLVRGPASEREQATSVLLADPCFQLRSICYLLGQPEPPAPGTALPAPDRKRFSLQSYADYISADELAQVEQMLAHLTSASAQAAAASLPTSEEDLCPICYAHPISAVFQPCGHKSCKACINQHLMNNKDCFFCKTTIVSVEDWEKGANTSTTSSAA.

Residue A2 is modified to N-acetylalanine. The 181-residue stretch at 74–254 (VDNEEEESQG…VAFNFGSRPL (181 aa)) folds into the B30.2/SPRY domain. Phosphoserine is present on S675. R683 carries the asymmetric dimethylarginine modification. The tract at residues 968 to 974 (WILVRLW) is interaction with NFKB1. 8 residues coordinate Zn(2+): C1254, C1257, C1269, H1271, C1274, C1277, C1288, and C1291. An RING-type zinc finger spans residues 1254-1292 (CPICYAHPISAVFQPCGHKSCKACINQHLMNNKDCFFCK).

In terms of assembly, component of the KPC complex composed of RNF123/KPC1 and UBAC1/KPC2. Interacts with UBAC1 and CDKN1B via its N-terminal domain. Interacts with RIGI (via N-terminus) and IFIH1 (via N-terminus). In terms of processing, ubiquitinated, leading to its degradation. Deubiquitinated by USP19, thereby stimulating CDKN1B ubiquitin-dependent degradation.

It is found in the cytoplasm. The catalysed reaction is S-ubiquitinyl-[E2 ubiquitin-conjugating enzyme]-L-cysteine + [acceptor protein]-L-lysine = [E2 ubiquitin-conjugating enzyme]-L-cysteine + N(6)-ubiquitinyl-[acceptor protein]-L-lysine.. Its pathway is protein modification; protein ubiquitination. In terms of biological role, catalytic subunit of the KPC complex that acts as E3 ubiquitin-protein ligase. Promotes the ubiquitination and proteasome-mediated degradation of CDKN1B which is the cyclin-dependent kinase inhibitor at the G0-G1 transition of the cell cycle. Also acts as a key regulator of the NF-kappa-B signaling by promoting maturation of the NFKB1 component of NF-kappa-B: acts by catalyzing ubiquitination of the NFKB1 p105 precursor, leading to limited proteasomal degradation of NFKB1 p105 and generation of the active NFKB1 p50 subunit. Also functions as an inhibitor of innate antiviral signaling mediated by RIGI and IFIH1 independently of its E3 ligase activity. Interacts with the N-terminal CARD domains of RIGI and IFIH1 and competes with the downstream adapter MAVS. This is E3 ubiquitin-protein ligase RNF123 from Homo sapiens (Human).